A 276-amino-acid chain; its full sequence is Rhomboid protease GlpG (276 aa).

Transmembrane regions (helical) follow at residues 94-114, 142-162, 169-189, 192-212, 229-249, and 250-270; these read GPVT…MSLI, IFMH…WYLG, LGSG…GYVQ, FSGP…GYVW, LIIF…GMSM, and ANGA…VDTL. S201 serves as the catalytic Nucleophile. The active site involves H254.

This sequence belongs to the peptidase S54 family.

It is found in the cell inner membrane. The enzyme catalyses Cleaves type-1 transmembrane domains using a catalytic dyad composed of serine and histidine that are contributed by different transmembrane domains.. Functionally, rhomboid-type serine protease that catalyzes intramembrane proteolysis. The sequence is that of Rhomboid protease GlpG from Salmonella paratyphi A (strain ATCC 9150 / SARB42).